The primary structure comprises 478 residues: Serine hydroxymethyltransferase (478 aa).

(6S)-5,6,7,8-tetrahydrofolate-binding positions include leucine 161 and 165 to 167 (GHL). N6-(pyridoxal phosphate)lysine is present on lysine 273. Glutamate 291 contributes to the (6S)-5,6,7,8-tetrahydrofolate binding site.

This sequence belongs to the SHMT family. In terms of assembly, homodimer. Pyridoxal 5'-phosphate serves as cofactor.

The protein resides in the cytoplasm. It carries out the reaction (6R)-5,10-methylene-5,6,7,8-tetrahydrofolate + glycine + H2O = (6S)-5,6,7,8-tetrahydrofolate + L-serine. It functions in the pathway one-carbon metabolism; tetrahydrofolate interconversion. The protein operates within amino-acid biosynthesis; glycine biosynthesis; glycine from L-serine: step 1/1. Its function is as follows. Catalyzes the reversible interconversion of serine and glycine with tetrahydrofolate (THF) serving as the one-carbon carrier. This reaction serves as the major source of one-carbon groups required for the biosynthesis of purines, thymidylate, methionine, and other important biomolecules. Also exhibits THF-independent aldolase activity toward beta-hydroxyamino acids, producing glycine and aldehydes, via a retro-aldol mechanism. This chain is Serine hydroxymethyltransferase, found in Salinispora tropica (strain ATCC BAA-916 / DSM 44818 / JCM 13857 / NBRC 105044 / CNB-440).